The sequence spans 308 residues: Acetaldehyde dehydrogenase 1 (308 aa).

10–13 contributes to the NAD(+) binding site; it reads SGNI. The active-site Acyl-thioester intermediate is the C128. NAD(+) contacts are provided by residues 159 to 167 and N285; that span reads SAGPGTRAN.

The protein belongs to the acetaldehyde dehydrogenase family.

The enzyme catalyses acetaldehyde + NAD(+) + CoA = acetyl-CoA + NADH + H(+). The sequence is that of Acetaldehyde dehydrogenase 1 from Salinispora arenicola (strain CNS-205).